The sequence spans 152 residues: Ribosomal RNA large subunit methyltransferase H (152 aa).

S-adenosyl-L-methionine is bound by residues leucine 69, glycine 96, and 118–123 (FGKLTF).

Belongs to the RNA methyltransferase RlmH family. As to quaternary structure, homodimer.

Its subcellular location is the cytoplasm. The enzyme catalyses pseudouridine(1915) in 23S rRNA + S-adenosyl-L-methionine = N(3)-methylpseudouridine(1915) in 23S rRNA + S-adenosyl-L-homocysteine + H(+). In terms of biological role, specifically methylates the pseudouridine at position 1915 (m3Psi1915) in 23S rRNA. This Mesomycoplasma hyopneumoniae (strain 7448) (Mycoplasma hyopneumoniae) protein is Ribosomal RNA large subunit methyltransferase H.